The following is a 204-amino-acid chain: Large ribosomal subunit protein bL25 (204 aa).

Residues 1–20 (MSETYELKAETRDRVGKGSS) are disordered.

The protein belongs to the bacterial ribosomal protein bL25 family. CTC subfamily. In terms of assembly, part of the 50S ribosomal subunit; part of the 5S rRNA/L5/L18/L25 subcomplex. Contacts the 5S rRNA. Binds to the 5S rRNA independently of L5 and L18.

Its function is as follows. This is one of the proteins that binds to the 5S RNA in the ribosome where it forms part of the central protuberance. This chain is Large ribosomal subunit protein bL25, found in Rhizobium meliloti (strain 1021) (Ensifer meliloti).